We begin with the raw amino-acid sequence, 1040 residues long: Desmoglein-4 (1040 aa).

Residues 1–23 (MDWLLFRNICLLILFMVVLGVNS) form the signal peptide. The propeptide occupies 24 to 49 (EFIVEVKELDIENGTTTWQTVRRQKR). 4 Cadherin domains span residues 50 to 157 (EWIK…PPVF), 158 to 269 (TQNV…FPIL), 270 to 385 (EKTS…GPTF), and 389 to 497 (SMTF…CPVI). The Extracellular portion of the chain corresponds to 50–633 (EWIKFAAACR…RQSNVGLGPA (584 aa)). The N-linked (GlcNAc...) asparagine glycan is linked to asparagine 110. Asparagine 545 carries N-linked (GlcNAc...) asparagine glycosylation. A helical membrane pass occupies residues 634–654 (GIGMIILGLLLLFLSPLLLLM). The Cytoplasmic portion of the chain corresponds to 655 to 1040 (CCCKRRQPEG…RYSNIHYSRQ (386 aa)). Desmoglein repeat repeat units lie at residues 883 to 909 (TLSE…IVTE) and 910 to 940 (TYTA…ETVM). Residues 1015–1040 (QTTRSTSPMTSQHRVTRYSNIHYSRQ) are disordered.

In terms of assembly, interacts with JUP.

The protein resides in the cell membrane. It localises to the cell junction. The protein localises to the desmosome. In terms of biological role, a component of desmosome cell-cell junctions which are required for positive regulation of cellular adhesion. Coordinates the transition from proliferation to differentiation in hair follicle keratinocytes. Plays a role in moderating lymphocyte migration to inflamed skin and maintaining homeostasis of the epidermal inflammatory response. This is Desmoglein-4 (Dsg4) from Rattus norvegicus (Rat).